A 469-amino-acid chain; its full sequence is Tetratricopeptide repeat protein 38 (469 aa).

Ala2 carries the post-translational modification N-acetylalanine. Ser5 is subject to Phosphoserine. TPR repeat units follow at residues 108–141 (REQL…HPTD), 180–213 (SYVK…NPTD), and 252–285 (CHNY…SLQA).

Belongs to the TTC38 family.

This chain is Tetratricopeptide repeat protein 38 (TTC38), found in Homo sapiens (Human).